Consider the following 164-residue polypeptide: R-phycoerythrin alpha chain (164 aa).

2 residues coordinate (2R,3E)-phycoerythrobilin: C82 and C139.

This sequence belongs to the phycobiliprotein family. In terms of assembly, heterodimer of an alpha and a beta chain. Post-translationally, contains two covalently linked bilin chromophores.

The protein localises to the plastid. Its subcellular location is the chloroplast thylakoid membrane. Its function is as follows. Light-harvesting photosynthetic bile pigment-protein from the phycobiliprotein complex. The sequence is that of R-phycoerythrin alpha chain (cpeA) from Pyropia haitanensis (Red seaweed).